Reading from the N-terminus, the 367-residue chain is Probable sugar phosphate/phosphate translocator At1g48230 (367 aa).

A run of 10 helical transmembrane segments spans residues 9–29, 43–63, 76–96, 106–126, 140–160, 163–183, 193–213, 229–249, 257–276, and 280–302; these read LVLT…VILY, LPIT…FLLI, FEIY…SLWF, VAFI…MAVV, MVLV…FNVI, VYQV…QVLL, VTSL…PWYV, WIFF…FLVI, IRVA…TVIF, and TITG…YNYI. Over residues 321-330 the composition is skewed to basic and acidic residues; the sequence is ITKDWKEKNS. The disordered stretch occupies residues 321–341; sequence ITKDWKEKNSSDGGSPRGLEL.

Belongs to the TPT transporter family. TPT (TC 2.A.7.9) subfamily.

Its subcellular location is the membrane. In Arabidopsis thaliana (Mouse-ear cress), this protein is Probable sugar phosphate/phosphate translocator At1g48230.